The following is a 719-amino-acid chain: Aminodeoxychorismate synthase (719 aa).

Residues 5–199 enclose the Glutamine amidotransferase type-1 domain; sequence RTLLIDNYDS…RDLSLRAAGH (195 aa). Catalysis depends on Cys-86, which acts as the Nucleophile. Active-site residues include His-173 and Glu-175. A disordered region spans residues 199 to 224; that stretch reads HRPPHTERIPAPAPAPAPAPAPAPPA. Over residues 209–224 the composition is skewed to pro residues; that stretch reads APAPAPAPAPAPAPPA.

The protein in the C-terminal section; belongs to the anthranilate synthase component I family.

The enzyme catalyses chorismate + L-glutamine = 4-amino-4-deoxychorismate + L-glutamate. It participates in antibiotic biosynthesis. Its function is as follows. Involved in pristinamycin I biosynthesis. Catalyzes the biosynthesis of 4-amino-4-deoxychorismate (ADC) from chorismate and glutamine. The sequence is that of Aminodeoxychorismate synthase from Streptomyces pristinaespiralis.